A 349-amino-acid chain; its full sequence is Flap endonuclease 1 (349 aa).

The N-domain stretch occupies residues 1 to 102 (MGVTELGKLI…AEIEARRRVK (102 aa)). Residues D31, D84, E156, E158, D177, D179, and D239 each coordinate Mg(2+). An I-domain region spans residues 120–261 (DVAKYMKRVI…KALKLVLEFG (142 aa)).

The protein belongs to the XPG/RAD2 endonuclease family. FEN1 subfamily. As to quaternary structure, interacts with PCNA. PCNA stimulates the nuclease activity without altering cleavage specificity. Mg(2+) serves as cofactor.

Structure-specific nuclease with 5'-flap endonuclease and 5'-3' exonuclease activities involved in DNA replication and repair. During DNA replication, cleaves the 5'-overhanging flap structure that is generated by displacement synthesis when DNA polymerase encounters the 5'-end of a downstream Okazaki fragment. Binds the unpaired 3'-DNA end and kinks the DNA to facilitate 5' cleavage specificity. Cleaves one nucleotide into the double-stranded DNA from the junction in flap DNA, leaving a nick for ligation. Also involved in the base excision repair (BER) pathway. Acts as a genome stabilization factor that prevents flaps from equilibrating into structures that lead to duplications and deletions. Also possesses 5'-3' exonuclease activity on nicked or gapped double-stranded DNA. In Pyrobaculum neutrophilum (strain DSM 2338 / JCM 9278 / NBRC 100436 / V24Sta) (Thermoproteus neutrophilus), this protein is Flap endonuclease 1.